The primary structure comprises 122 residues: UPF0102 protein VIBHAR_00890 (122 aa).

It belongs to the UPF0102 family.

The sequence is that of UPF0102 protein VIBHAR_00890 from Vibrio campbellii (strain ATCC BAA-1116).